The primary structure comprises 406 residues: Putative phosphate permease TK2061 (406 aa).

Transmembrane regions (helical) follow at residues 2–22, 45–65, 82–102, 115–135, 139–159, 182–202, 208–228, 288–308, 324–346, and 385–405; these read AVMD…AWAI, AVLI…KSVT, TVLI…LVIA, IIGG…VNWG, QVVL…FLVF, FWIG…VLHG, GVLF…FLTL, VPVP…GVAT, LTNT…ASWL, and FVTV…LMIV.

The protein belongs to the inorganic phosphate transporter (PiT) (TC 2.A.20) family.

Its subcellular location is the cell membrane. Potential transporter for phosphate. The polypeptide is Putative phosphate permease TK2061 (Thermococcus kodakarensis (strain ATCC BAA-918 / JCM 12380 / KOD1) (Pyrococcus kodakaraensis (strain KOD1))).